The chain runs to 253 residues: Snake venom serine proteinase 14 (253 aa).

An N-terminal signal peptide occupies residues 1–18; sequence MVLIRVLANLLILQLSYA. The propeptide occupies 19 to 24; that stretch reads QKSSEL. Residues 25 to 244 enclose the Peptidase S1 domain; the sequence is VIGGDECNIN…YTDWIQSIIA (220 aa). Cystine bridges form between Cys-31/Cys-158, Cys-49/Cys-65, Cys-93/Cys-251, Cys-137/Cys-205, Cys-169/Cys-184, and Cys-195/Cys-220. Catalysis depends on charge relay system residues His-64 and Asp-105. Asn-116, Asn-117, and Asn-149 each carry an N-linked (GlcNAc...) asparagine glycan. The Charge relay system role is filled by Ser-199.

It belongs to the peptidase S1 family. Snake venom subfamily. In terms of assembly, monomer. In terms of tissue distribution, expressed by the venom gland.

It localises to the secreted. Snake venom serine protease that may act in the hemostasis system of the prey. The sequence is that of Snake venom serine proteinase 14 from Crotalus adamanteus (Eastern diamondback rattlesnake).